Consider the following 319-residue polypeptide: Protoheme IX farnesyltransferase (319 aa).

Helical transmembrane passes span 34–54, 55–75, 95–115, 119–139, 155–175, 182–202, 221–241, 244–264, and 291–311; these read VMSLVVFTAFAGLVLAPGHIN, PVLGLIAILCIAVGAGASGAL, IPAGRVAPSEALAFGLVLSGF, ILGLAVNWLSAAILAFTIFFY, IVIGGAAGAFPPVIGWACVTG, VVLFLIIFLWTPAHFWALALF, VPTTKNQIVAYAVLTAIIGVV, FMGFASLGYGVVATVLGVIFV, and IFYLFAIFSALLIDRLVAVLM.

The protein belongs to the UbiA prenyltransferase family. Protoheme IX farnesyltransferase subfamily.

It localises to the cell inner membrane. It carries out the reaction heme b + (2E,6E)-farnesyl diphosphate + H2O = Fe(II)-heme o + diphosphate. It participates in porphyrin-containing compound metabolism; heme O biosynthesis; heme O from protoheme: step 1/1. In terms of biological role, converts heme B (protoheme IX) to heme O by substitution of the vinyl group on carbon 2 of heme B porphyrin ring with a hydroxyethyl farnesyl side group. The protein is Protoheme IX farnesyltransferase of Rhizobium rhizogenes (strain K84 / ATCC BAA-868) (Agrobacterium radiobacter).